A 1476-amino-acid chain; its full sequence is Glucosyltransferase-I (1476 aa).

Residues 1–34 form the signal peptide; sequence MDKKVRYKLRKVKKRWVTVSVASAVMTLTTLSGG. 2 disordered regions span residues 42-89 and 102-141; these read ESKS…ISSS and PYTV…TEAD. Polar residues-rich tracts occupy residues 43-81 and 102-139; these read SKSQ…QTNH and PYTV…QTTE. Cell wall-binding repeat units lie at residues 159–178 and 179–199; these read LPNV…NGKV and RTNF…TGAY. A catalytic; approximate region spans residues 200-1051; sequence TDTSIDTVNK…NTYFNISDNK (852 aa). Cell wall-binding repeat units lie at residues 1087 to 1106, 1107 to 1126, 1170 to 1189, 1214 to 1234, 1235 to 1254, 1279 to 1299, 1300 to 1319, 1344 to 1364, 1365 to 1384, 1409 to 1429, and 1430 to 1449; these read KNTF…NGYM, VTGA…NGLQ, SVGL…MGYQ, RNRF…DGAA, VTGS…NGVQ, RNRF…NGYA, and VTGA…NGVQ.

The protein belongs to the glycosyl hydrolase 70 family.

It is found in the secreted. The enzyme catalyses [(1-&gt;6)-alpha-D-glucosyl](n) + sucrose = [(1-&gt;6)-alpha-D-glucosyl](n+1) + D-fructose. In terms of biological role, production of extracellular glucans, that are thought to play a key role in the development of the dental plaque because of their ability to adhere to smooth surfaces and mediate the aggregation of bacterial cells and food debris. The sequence is that of Glucosyltransferase-I (gtfB) from Streptococcus mutans serotype c (strain ATCC 700610 / UA159).